Consider the following 1235-residue polypeptide: ATP-dependent helicase/nuclease subunit A (1235 aa).

In terms of domain architecture, UvrD-like helicase ATP-binding spans 12-482 (SLWTDDQWKA…IDLSQNFRSR (471 aa)). 33–40 (AAAGSGKT) contacts ATP. A UvrD-like helicase C-terminal domain is found at 509 to 800 (AAELTLGASF…RMMTIHASKG (292 aa)).

The protein belongs to the helicase family. AddA subfamily. In terms of assembly, heterodimer of AddA and AddB/RexB. Requires Mg(2+) as cofactor.

It carries out the reaction Couples ATP hydrolysis with the unwinding of duplex DNA by translocating in the 3'-5' direction.. The enzyme catalyses ATP + H2O = ADP + phosphate + H(+). Its function is as follows. The heterodimer acts as both an ATP-dependent DNA helicase and an ATP-dependent, dual-direction single-stranded exonuclease. Recognizes the chi site generating a DNA molecule suitable for the initiation of homologous recombination. The AddA nuclease domain is required for chi fragment generation; this subunit has the helicase and 3' -&gt; 5' nuclease activities. The polypeptide is ATP-dependent helicase/nuclease subunit A (Listeria monocytogenes serotype 4b (strain F2365)).